We begin with the raw amino-acid sequence, 170 residues long: Putative apoptosis inhibitor ORF87 (170 aa).

BIR repeat units lie at residues Arg22–Lys92 and Arg104–Ser169.

May act as an apoptosis inhibitor. The polypeptide is Putative apoptosis inhibitor ORF87 (Ostreid herpesvirus 1 (isolate France) (OsHV-1)).